The primary structure comprises 646 residues: Macrolide export ATP-binding/permease protein MacB (646 aa).

Residues 5–243 enclose the ABC transporter domain; sequence IELKGVSRTY…TLPKTNRIRQ (239 aa). 41–48 is a binding site for ATP; sequence GASGSGKS. The next 4 helical transmembrane spans lie at 272-292, 518-538, 570-590, and 611-631; these read TLTM…VALG, FSIL…IGVM, IIEA…LSYI, and AAVA…YLPA.

Belongs to the ABC transporter superfamily. Macrolide exporter (TC 3.A.1.122) family. As to quaternary structure, homodimer. Part of the tripartite efflux system MacAB-TolC, which is composed of an inner membrane transporter, MacB, a periplasmic membrane fusion protein, MacA, and an outer membrane component, TolC. The complex forms a large protein conduit and can translocate molecules across both the inner and outer membranes. Interacts with MacA.

It is found in the cell inner membrane. Its function is as follows. Part of the tripartite efflux system MacAB-TolC. MacB is a non-canonical ABC transporter that contains transmembrane domains (TMD), which form a pore in the inner membrane, and an ATP-binding domain (NBD), which is responsible for energy generation. Confers resistance against macrolides. This chain is Macrolide export ATP-binding/permease protein MacB, found in Escherichia coli.